The following is a 370-amino-acid chain: MPPLSLLIKPASSGCNLKCTYCFYHSLSDNRNVKSYGIMRDEVLESMVKRVLNEADGHCSFAFQGGEPILAGLEFFERLMELQRKHNYKNLKIYNSLQTNGTLIDESWAKFLSENKFLVGLSMDGPKEIHNLNRKDCCGLDTFSKVERAAELFKKYKVEFNILCVVTSNTARHVNKIYRYFKEKDFKFLQFINCLDPLYEEKGKYNYSLKPQDYTKFLKNLFDLWYEDFLNGNRVSIRYFDGLLETILLGKSSSCGMNGTCTCQFVVESDGSVYPCDFYVLDKWRLGNIQDMTMKELFETNKNHEFIKSSFKVHEECKKCKWFKLCKGGCRRCRDSKEDSDLELNYYCQSYKEFFEYAFPRLINVANNIK.

A Radical SAM core domain is found at 1 to 227 (MPPLSLLIKP…LKNLFDLWYE (227 aa)). Positions 15 and 19 each coordinate [4Fe-4S] cluster. Tyrosine 21 is a binding site for S-adenosyl-L-methionine. Residue cysteine 22 coordinates [4Fe-4S] cluster. S-adenosyl-L-methionine is bound by residues glycine 66, serine 122, arginine 134, and leucine 195. [4Fe-4S] cluster contacts are provided by cysteine 255, cysteine 261, and cysteine 276. Aspartate 277 acts as the Proton acceptor in catalysis. Positions 317, 320, 326, 330, and 348 each coordinate [4Fe-4S] cluster.

The protein belongs to the radical SAM superfamily. Anaerobic sulfatase-maturating enzyme family. The cofactor is [4Fe-4S] cluster.

It catalyses the reaction L-cysteinyl-[sulfatase] + S-adenosyl-L-methionine + H2O = 3-oxo-L-alanyl-[sulfatase] + hydrogen sulfide + 5'-deoxyadenosine + L-methionine + 2 H(+). It participates in protein modification; sulfatase oxidation. Functionally, involved in 'Cys-type' sulfatase maturation under anaerobic conditions. Catalyzes the post-translational modification of cysteine into 3-oxoalanine (also known as C(alpha)-formylglycine (FGly)), by a free radical chemical mechanism initiated via the reductive cleavage of S-adenosyl-L-methionine (SAM). The protein is Cysteine-type anaerobic sulfatase-maturating enzyme of Clostridium perfringens (strain 13 / Type A).